Reading from the N-terminus, the 411-residue chain is Serine--tRNA ligase (411 aa).

226–228 lines the L-serine pocket; the sequence is TSE. 257–259 contacts ATP; that stretch reads RKE. E280 lines the L-serine pocket. ATP is bound at residue 344 to 347; sequence EISS. L-serine is bound at residue S379.

The protein belongs to the class-II aminoacyl-tRNA synthetase family. Type-1 seryl-tRNA synthetase subfamily. As to quaternary structure, homodimer. The tRNA molecule binds across the dimer.

The protein resides in the cytoplasm. It carries out the reaction tRNA(Ser) + L-serine + ATP = L-seryl-tRNA(Ser) + AMP + diphosphate + H(+). It catalyses the reaction tRNA(Sec) + L-serine + ATP = L-seryl-tRNA(Sec) + AMP + diphosphate + H(+). The protein operates within aminoacyl-tRNA biosynthesis; selenocysteinyl-tRNA(Sec) biosynthesis; L-seryl-tRNA(Sec) from L-serine and tRNA(Sec): step 1/1. In terms of biological role, catalyzes the attachment of serine to tRNA(Ser). Is also able to aminoacylate tRNA(Sec) with serine, to form the misacylated tRNA L-seryl-tRNA(Sec), which will be further converted into selenocysteinyl-tRNA(Sec). The sequence is that of Serine--tRNA ligase from Campylobacter jejuni subsp. doylei (strain ATCC BAA-1458 / RM4099 / 269.97).